Consider the following 291-residue polypeptide: 5'-3' exonuclease (291 aa).

Positions 176 to 269 constitute a 5'-3' exonuclease domain; sequence TPKQVIEYKG…VHAALKPIDK (94 aa).

In terms of biological role, 5'-3' exonuclease acting preferentially on double-stranded DNA. This chain is 5'-3' exonuclease (polA), found in Mycoplasma pneumoniae (strain ATCC 29342 / M129 / Subtype 1) (Mycoplasmoides pneumoniae).